We begin with the raw amino-acid sequence, 433 residues long: Ribosomal protein uS12 methylthiotransferase RimO (433 aa).

Residues 6 to 122 (QSIFLLSLGC…IISVLGGSYR (117 aa)) enclose the MTTase N-terminal domain. [4Fe-4S] cluster contacts are provided by Cys15, Cys51, Cys85, Cys146, Cys150, and Cys153. Residues 132-362 (LTPPHYAWLK…MELQESIAAE (231 aa)) enclose the Radical SAM core domain. One can recognise a TRAM domain in the interval 365 to 432 (RELEGRVMKV…AYELHGRVND (68 aa)).

It belongs to the methylthiotransferase family. RimO subfamily. [4Fe-4S] cluster serves as cofactor.

Its subcellular location is the cytoplasm. The enzyme catalyses L-aspartate(89)-[ribosomal protein uS12]-hydrogen + (sulfur carrier)-SH + AH2 + 2 S-adenosyl-L-methionine = 3-methylsulfanyl-L-aspartate(89)-[ribosomal protein uS12]-hydrogen + (sulfur carrier)-H + 5'-deoxyadenosine + L-methionine + A + S-adenosyl-L-homocysteine + 2 H(+). In terms of biological role, catalyzes the methylthiolation of an aspartic acid residue of ribosomal protein uS12. In Prosthecochloris aestuarii (strain DSM 271 / SK 413), this protein is Ribosomal protein uS12 methylthiotransferase RimO.